A 277-amino-acid chain; its full sequence is Probable endonuclease 4 (277 aa).

Zn(2+) contacts are provided by H67, H107, E141, D173, H176, H207, D220, H222, and E252.

It belongs to the AP endonuclease 2 family. Zn(2+) is required as a cofactor.

The enzyme catalyses Endonucleolytic cleavage to 5'-phosphooligonucleotide end-products.. In terms of biological role, endonuclease IV plays a role in DNA repair. It cleaves phosphodiester bonds at apurinic or apyrimidinic (AP) sites, generating a 3'-hydroxyl group and a 5'-terminal sugar phosphate. The sequence is that of Probable endonuclease 4 from Finegoldia magna (strain ATCC 29328 / DSM 20472 / WAL 2508) (Peptostreptococcus magnus).